Consider the following 285-residue polypeptide: NADPH-dependent 7-cyano-7-deazaguanine reductase (285 aa).

80–82 (VES) is a binding site for substrate. Position 82 to 83 (82 to 83 (SK)) interacts with NADPH. Cysteine 191 functions as the Thioimide intermediate in the catalytic mechanism. Residue aspartate 198 is the Proton donor of the active site. Substrate is bound at residue 231 to 232 (HE). 260-261 (RG) provides a ligand contact to NADPH.

Belongs to the GTP cyclohydrolase I family. QueF type 2 subfamily. In terms of assembly, homodimer.

The protein resides in the cytoplasm. It catalyses the reaction 7-aminomethyl-7-carbaguanine + 2 NADP(+) = 7-cyano-7-deazaguanine + 2 NADPH + 3 H(+). It participates in tRNA modification; tRNA-queuosine biosynthesis. In terms of biological role, catalyzes the NADPH-dependent reduction of 7-cyano-7-deazaguanine (preQ0) to 7-aminomethyl-7-deazaguanine (preQ1). The polypeptide is NADPH-dependent 7-cyano-7-deazaguanine reductase (Psychrobacter arcticus (strain DSM 17307 / VKM B-2377 / 273-4)).